Reading from the N-terminus, the 473-residue chain is ATP synthase subunit beta (473 aa).

Residue 153–160 (GGAGVGKT) participates in ATP binding.

This sequence belongs to the ATPase alpha/beta chains family. As to quaternary structure, F-type ATPases have 2 components, CF(1) - the catalytic core - and CF(0) - the membrane proton channel. CF(1) has five subunits: alpha(3), beta(3), gamma(1), delta(1), epsilon(1). CF(0) has three main subunits: a(1), b(2) and c(9-12). The alpha and beta chains form an alternating ring which encloses part of the gamma chain. CF(1) is attached to CF(0) by a central stalk formed by the gamma and epsilon chains, while a peripheral stalk is formed by the delta and b chains.

It is found in the cell inner membrane. The catalysed reaction is ATP + H2O + 4 H(+)(in) = ADP + phosphate + 5 H(+)(out). Functionally, produces ATP from ADP in the presence of a proton gradient across the membrane. The catalytic sites are hosted primarily by the beta subunits. The protein is ATP synthase subunit beta of Rickettsia rickettsii (strain Iowa).